The sequence spans 694 residues: Elongation factor G (694 aa).

The tr-type G domain occupies 8–287 (EDYRNFGIMA…AVVEFLPAPT (280 aa)). GTP contacts are provided by residues 17–24 (AHIDAGKT), 86–90 (DTPGH), and 140–143 (NKMD).

This sequence belongs to the TRAFAC class translation factor GTPase superfamily. Classic translation factor GTPase family. EF-G/EF-2 subfamily.

The protein resides in the cytoplasm. Functionally, catalyzes the GTP-dependent ribosomal translocation step during translation elongation. During this step, the ribosome changes from the pre-translocational (PRE) to the post-translocational (POST) state as the newly formed A-site-bound peptidyl-tRNA and P-site-bound deacylated tRNA move to the P and E sites, respectively. Catalyzes the coordinated movement of the two tRNA molecules, the mRNA and conformational changes in the ribosome. The polypeptide is Elongation factor G (Brucella abortus (strain S19)).